Consider the following 348-residue polypeptide: Selenide, water dikinase (348 aa).

U17 is an active-site residue. Position 17 (U17) is a non-standard amino acid, selenocysteine. Residues K20 and T48–D50 contribute to the ATP site. A Mg(2+)-binding site is contributed by D51. ATP-binding positions include D68, D91, and G138–T140. Residue D91 participates in Mg(2+) binding. A Mg(2+)-binding site is contributed by D226.

It belongs to the selenophosphate synthase 1 family. Class I subfamily. Homodimer. Mg(2+) serves as cofactor.

The catalysed reaction is hydrogenselenide + ATP + H2O = selenophosphate + AMP + phosphate + 2 H(+). Functionally, synthesizes selenophosphate from selenide and ATP. This chain is Selenide, water dikinase, found in Clostridioides difficile (strain 630) (Peptoclostridium difficile).